Here is a 181-residue protein sequence, read N- to C-terminus: Shikimate kinase (181 aa).

17-22 contacts ATP; sequence GAGKTT. T21 is a binding site for Mg(2+). D39, R63, and G85 together coordinate substrate. R122 serves as a coordination point for ATP. R141 contacts substrate.

It belongs to the shikimate kinase family. In terms of assembly, monomer. Mg(2+) is required as a cofactor.

The protein localises to the cytoplasm. The enzyme catalyses shikimate + ATP = 3-phosphoshikimate + ADP + H(+). It functions in the pathway metabolic intermediate biosynthesis; chorismate biosynthesis; chorismate from D-erythrose 4-phosphate and phosphoenolpyruvate: step 5/7. Its function is as follows. Catalyzes the specific phosphorylation of the 3-hydroxyl group of shikimic acid using ATP as a cosubstrate. The polypeptide is Shikimate kinase (Trichormus variabilis (strain ATCC 29413 / PCC 7937) (Anabaena variabilis)).